The following is a 336-amino-acid chain: Isopentenyl-diphosphate delta-isomerase (336 aa).

Residue 5–6 coordinates substrate; the sequence is RK. FMN is bound by residues 60–62, Ser90, and Asn117; that span reads AMT. Gln147 contacts substrate. Residue Glu148 participates in Mg(2+) binding. Residues Lys179, Ser204, Thr209, 253-255, and 274-275 contribute to the FMN site; these read GVR and SR.

This sequence belongs to the IPP isomerase type 2 family. In terms of assembly, homooctamer. Dimer of tetramers. The cofactor is FMN. It depends on NADPH as a cofactor. Requires Mg(2+) as cofactor.

The protein resides in the cytoplasm. It catalyses the reaction isopentenyl diphosphate = dimethylallyl diphosphate. Its function is as follows. Involved in the biosynthesis of isoprenoids. Catalyzes the 1,3-allylic rearrangement of the homoallylic substrate isopentenyl (IPP) to its allylic isomer, dimethylallyl diphosphate (DMAPP). The sequence is that of Isopentenyl-diphosphate delta-isomerase from Streptococcus pneumoniae (strain ATCC BAA-255 / R6).